Here is a 414-residue protein sequence, read N- to C-terminus: Enolase (414 aa).

Residue Q162 participates in (2R)-2-phosphoglycerate binding. E204 serves as the catalytic Proton donor. D239, E280, and D307 together coordinate Mg(2+). 4 residues coordinate (2R)-2-phosphoglycerate: K332, R361, S362, and K383. The active-site Proton acceptor is the K332.

It belongs to the enolase family. It depends on Mg(2+) as a cofactor.

The protein resides in the cytoplasm. It localises to the secreted. Its subcellular location is the cell surface. It catalyses the reaction (2R)-2-phosphoglycerate = phosphoenolpyruvate + H2O. It functions in the pathway carbohydrate degradation; glycolysis; pyruvate from D-glyceraldehyde 3-phosphate: step 4/5. Functionally, catalyzes the reversible conversion of 2-phosphoglycerate (2-PG) into phosphoenolpyruvate (PEP). It is essential for the degradation of carbohydrates via glycolysis. The chain is Enolase from Campylobacter jejuni (strain RM1221).